The chain runs to 305 residues: Mitochondrial thiamine pyrophosphate carrier 1 (305 aa).

6 helical membrane-spanning segments follow: residues 16–32 (VSPY…GAVA), 84–100 (ILYV…YSSI), 122–142 (LVSG…FDLL), 169–193 (GFTG…LMFW), 213–229 (ICGF…TFPL), and 270–287 (GFGI…VSLF). Solcar repeat units follow at residues 16 to 103 (VSPY…ISRW), 116 to 201 (PSSA…VRET), and 206 to 295 (DIPF…SLAA).

It belongs to the mitochondrial carrier (TC 2.A.29) family.

Its subcellular location is the mitochondrion inner membrane. Mitochondrial transporter that mediates uptake of thiamine pyrophosphate (ThPP) into mitochondria. In Scheffersomyces stipitis (strain ATCC 58785 / CBS 6054 / NBRC 10063 / NRRL Y-11545) (Yeast), this protein is Mitochondrial thiamine pyrophosphate carrier 1 (TPC1).